The primary structure comprises 310 residues: Eukaryotic translation initiation factor 3 subunit G (310 aa).

Disordered regions lie at residues 1-32 (MPTE…PVTK) and 179-229 (TGDK…DDNA). A compositionally biased stretch (low complexity) spans 187 to 196 (GAEPEPAQAP). Residues 211–229 (GGSRRGESMQPNRRADDNA) show a composition bias toward basic and acidic residues. One can recognise an RRM domain in the interval 229–307 (ATIRVTNLSE…LILNVEWAKP (79 aa)).

It belongs to the eIF-3 subunit G family. Component of the eukaryotic translation initiation factor 3 (eIF-3) complex, which is composed of 13 subunits: eif3a, eif3b, eif3c, eif3d, eif3e, eif3f, eif3g, eif3h, eif3i, eif3j, eif3k, eif3l and eif3m.

Its subcellular location is the cytoplasm. Its function is as follows. RNA-binding component of the eukaryotic translation initiation factor 3 (eIF-3) complex, which is involved in protein synthesis of a specialized repertoire of mRNAs and, together with other initiation factors, stimulates binding of mRNA and methionyl-tRNAi to the 40S ribosome. The eIF-3 complex specifically targets and initiates translation of a subset of mRNAs involved in cell proliferation. This subunit can bind 18S rRNA. The chain is Eukaryotic translation initiation factor 3 subunit G (eif3g) from Xenopus tropicalis (Western clawed frog).